The primary structure comprises 560 residues: RNA polymerase-associated protein C651.09c (560 aa).

Disordered regions lie at residues 15–74 and 128–207; these read DDSD…KNPY and YMAQ…KVEQ. Positions 148 to 171 are enriched in basic and acidic residues; sequence GKRDKLTELKKRRQERSARSVSER. Acidic residues predominate over residues 180–195; that stretch reads DYEEQNESEKSEEEEG. Ser-197 bears the Phosphoserine mark. Positions 214-345 constitute a Plus3 domain; the sequence is SANLYDLNAI…KLNDLRDMSK (132 aa). The stretch at 387 to 456 forms a coiled coil; sequence AGNAELVKEI…RRRLSAAATA (70 aa). The span at 440-449 shows a compositional bias: basic and acidic residues; the sequence is EQRMNEERRR. Positions 440–486 are disordered; sequence EQRMNEERRRLSAAATATPMSAPTSVLTGTSPQPSPSLSTSIMSTPK. Residues 451–480 are compositionally biased toward low complexity; the sequence is SAAATATPMSAPTSVLTGTSPQPSPSLSTS. A phosphoserine mark is found at Ser-502 and Ser-506.

Component of the PAF1 complex.

Its subcellular location is the nucleus. It is found in the nucleoplasm. Functionally, the PAF1 complex is a multifunctional complex. Involved in transcription initiation via genetic interactions with TATA-binding proteins. Involved in elongation. Also has a role in transcription-coupled histone modification. Important for TATA site selection by TBP. Directly or indirectly regulates the DNA-binding properties of the TATA box-binding protein, and the relative activities of different TATA elements. In Schizosaccharomyces pombe (strain 972 / ATCC 24843) (Fission yeast), this protein is RNA polymerase-associated protein C651.09c.